The primary structure comprises 130 residues: Small ribosomal subunit protein uS9 (130 aa).

It belongs to the universal ribosomal protein uS9 family.

The polypeptide is Small ribosomal subunit protein uS9 (Shewanella pealeana (strain ATCC 700345 / ANG-SQ1)).